Here is a 101-residue protein sequence, read N- to C-terminus: Phosphoribosyl-AMP cyclohydrolase (101 aa).

A Mg(2+)-binding site is contributed by Asp71. Cys72 contacts Zn(2+). 2 residues coordinate Mg(2+): Asp73 and Asp75. Positions 88 and 95 each coordinate Zn(2+).

Belongs to the PRA-CH family. In terms of assembly, homodimer. The cofactor is Mg(2+). It depends on Zn(2+) as a cofactor.

The protein localises to the cytoplasm. It carries out the reaction 1-(5-phospho-beta-D-ribosyl)-5'-AMP + H2O = 1-(5-phospho-beta-D-ribosyl)-5-[(5-phospho-beta-D-ribosylamino)methylideneamino]imidazole-4-carboxamide. Its pathway is amino-acid biosynthesis; L-histidine biosynthesis; L-histidine from 5-phospho-alpha-D-ribose 1-diphosphate: step 3/9. Its function is as follows. Catalyzes the hydrolysis of the adenine ring of phosphoribosyl-AMP. The protein is Phosphoribosyl-AMP cyclohydrolase of Bacillus cereus (strain 03BB102).